We begin with the raw amino-acid sequence, 189 residues long: MLVGYARVSTEEQSLNRQIDMLVDYGVDKRNIYQEKISGMKPNREQLDKMIDELQEGDTVIITDLTRISRSTKDLLNIIDRIKAKGASIKSIKDTWLDTSSDNPYNSFLLTVMSGLSQLERDLISQRTKEGLKSAKARGRNGGRPSKRNDKADTVGLLYREGYKIVDIVKQTGLSRATVYRVLNDLKLK.

Residues 1–139 (MLVGYARVST…EGLKSAKARG (139 aa)) form the Resolvase/invertase-type recombinase catalytic domain. S9 (O-(5'-phospho-DNA)-serine intermediate) is an active-site residue. A disordered region spans residues 130–151 (EGLKSAKARGRNGGRPSKRNDK). A DNA-binding region (H-T-H motif) is located at residues 165-184 (IVDIVKQTGLSRATVYRVLN).

Belongs to the site-specific recombinase resolvase family.

Functionally, a likely role for the res protein would be to stabilize pIP404 by reducing the number of plasmid multimers resulting from homologous recombination. The polypeptide is Resolvase (res) (Clostridium perfringens).